The primary structure comprises 380 residues: MSALEKSMHLGRLPSRPPLPGSGGSQSGAKMRMGPGRKRDFSPVPWSQYFESMEDVEVENETGKDTFRVYKSGSEGPVLLLLHGGGHSALSWAVFTAAIISRVQCRIVALDLRGHGETKVRNSEDLSAETMAKDVGNVVEAMYGDLPPPIMLIGHSMGGAIAVHTASSNLVPSLLGLCMIDVVEGTAMDALNSMQNFLRGRPKTFKSLENAIEWSVKSGQIRNLESARVSMVGQVKQCEGITSPEGSKSIVEGIIEEEEEDEEGSESVNKRKKEDDMETKKDHPYTWRIELAKTEKYWDGWFRGLSNLFLSCPIPKLLLLAGVDRLDKDLTIGQMQGKFQMQVLPQCGHAVHEDAPDKVAEAVATFLIRHRFAEPIGGFQ.

The interval 1–38 is disordered; the sequence is MSALEKSMHLGRLPSRPPLPGSGGSQSGAKMRMGPGRK. At serine 15 the chain carries Phosphoserine. Arginine 16 is modified (asymmetric dimethylarginine; alternate). At arginine 16 the chain carries Omega-N-methylarginine; alternate. Serine 42 carries the phosphoserine modification. Residues serine 156 and aspartate 181 contribute to the active site. Positions 255-265 are enriched in acidic residues; it reads IEEEEEDEEGS. The interval 255–280 is disordered; it reads IEEEEEDEEGSESVNKRKKEDDMETK. The span at 268–280 shows a compositional bias: basic and acidic residues; it reads VNKRKKEDDMETK. Histidine 349 is an active-site residue.

Belongs to the AB hydrolase superfamily. As to quaternary structure, binds PPP2CA and PPP2CB. Phosphorylated by SIK1 following increases in intracellular sodium, leading to dissociation from the protein phosphatase 2A (PP2A) complex and subsequent dephosphorylation of sodium/potassium-transporting ATPase ATP1A1.

It carries out the reaction [phosphatase 2A protein]-C-terminal L-leucine methyl ester + H2O = [phosphatase 2A protein]-C-terminal L-leucine + methanol + H(+). Its function is as follows. Demethylates proteins that have been reversibly carboxymethylated. Demethylates PPP2CB (in vitro) and PPP2CA. Binding to PPP2CA displaces the manganese ion and inactivates the enzyme. The polypeptide is Protein phosphatase methylesterase 1 (PPME1) (Bos taurus (Bovine)).